The chain runs to 109 residues: U16-hexatoxin-Hi1a (109 aa).

A signal peptide spans 1-16; the sequence is LTGHLCCMMIWWQATQ. Residues 17–43 constitute a propeptide that is removed on maturation; sequence VISPPLPVIREENNSHKMGVSLFPLKR.

Post-translationally, contains 2 disulfide bonds. Expressed by the venom gland.

The protein resides in the secreted. Its function is as follows. Probable ion channel inhibitor. The chain is U16-hexatoxin-Hi1a from Hadronyche infensa (Fraser island funnel-web spider).